We begin with the raw amino-acid sequence, 200 residues long: Holliday junction branch migration complex subunit RuvA (200 aa).

Residues 1 to 63 (MIASVRGVVT…EDSLTLYGFA (63 aa)) are domain I. The domain II stretch occupies residues 64 to 142 (DDNAKALFEL…PVPVGGDGAA (79 aa)). The flexible linker stretch occupies residues 143 to 151 (GVTTGAWPE). The domain III stretch occupies residues 151 to 200 (EQVRQALVGLGWTAGQAEQAVAAVAETVDGEVPPVPVLLRQAIRLLGRTR).

Belongs to the RuvA family. Homotetramer. Forms an RuvA(8)-RuvB(12)-Holliday junction (HJ) complex. HJ DNA is sandwiched between 2 RuvA tetramers; dsDNA enters through RuvA and exits via RuvB. An RuvB hexamer assembles on each DNA strand where it exits the tetramer. Each RuvB hexamer is contacted by two RuvA subunits (via domain III) on 2 adjacent RuvB subunits; this complex drives branch migration. In the full resolvosome a probable DNA-RuvA(4)-RuvB(12)-RuvC(2) complex forms which resolves the HJ.

Its subcellular location is the cytoplasm. In terms of biological role, the RuvA-RuvB-RuvC complex processes Holliday junction (HJ) DNA during genetic recombination and DNA repair, while the RuvA-RuvB complex plays an important role in the rescue of blocked DNA replication forks via replication fork reversal (RFR). RuvA specifically binds to HJ cruciform DNA, conferring on it an open structure. The RuvB hexamer acts as an ATP-dependent pump, pulling dsDNA into and through the RuvAB complex. HJ branch migration allows RuvC to scan DNA until it finds its consensus sequence, where it cleaves and resolves the cruciform DNA. This chain is Holliday junction branch migration complex subunit RuvA, found in Salinispora arenicola (strain CNS-205).